Consider the following 273-residue polypeptide: Urease accessory protein UreD (273 aa).

The protein belongs to the UreD family. In terms of assembly, ureD, UreF and UreG form a complex that acts as a GTP-hydrolysis-dependent molecular chaperone, activating the urease apoprotein by helping to assemble the nickel containing metallocenter of UreC. The UreE protein probably delivers the nickel.

It is found in the cytoplasm. Required for maturation of urease via the functional incorporation of the urease nickel metallocenter. The sequence is that of Urease accessory protein UreD from Rhizobium etli (strain ATCC 51251 / DSM 11541 / JCM 21823 / NBRC 15573 / CFN 42).